The chain runs to 277 residues: S-formylglutathione hydrolase FrmB (277 aa).

Residues Ser145, Asp221, and His254 each act as charge relay system in the active site.

It belongs to the esterase D family.

It carries out the reaction S-formylglutathione + H2O = formate + glutathione + H(+). Functionally, serine hydrolase involved in the detoxification of formaldehyde. Hydrolyzes S-formylglutathione to glutathione and formate. This Escherichia coli O139:H28 (strain E24377A / ETEC) protein is S-formylglutathione hydrolase FrmB (frmB).